We begin with the raw amino-acid sequence, 487 residues long: MTELFIDGAWVDGAGPVFASRNPGTNERVWEGASASADDVERAVASARRAFAAWSALDLDARCTIVKRFAALLVERKEALATMIGRETGKPLWEARTEVASMAAKVDISITAYHERTGEKRAPMADGVAVLRHRPHGVVAVFGPYNFPGHLPNGHIVPALIAGNTVVFKPSELAPGVARATVEIWRDAGLPAGVLNLVQGEKDTGVALANHRQIDGLFFTGSSDTGTLLHKQFGGRPEIVLALEMGGNNPLVVAEVEDIDAAVHHAIQSAFLSAGQRCTCARRILVPRGAFGDRFVARLADVASKITASVFDADPQPFMGAVISARAASRLVAAQARLVGLGASPIIEMKQRDPALGFVNAAILDVTNVRELPDEEHFGPLAQIVRYTDLDDAIARANDTAFGLSAGLLADDEQAWHTFRRAIRAGIVNWNRPTNGASSAAPFGGAGRSGNHRPSAYYAADYCAYPMASVESAQLQMPASLSPGLHF.

221 to 226 (GSSDTG) serves as a coordination point for NAD(+). Catalysis depends on residues Glu244 and Cys278.

Belongs to the aldehyde dehydrogenase family. AstD subfamily.

It carries out the reaction N-succinyl-L-glutamate 5-semialdehyde + NAD(+) + H2O = N-succinyl-L-glutamate + NADH + 2 H(+). The protein operates within amino-acid degradation; L-arginine degradation via AST pathway; L-glutamate and succinate from L-arginine: step 4/5. Its function is as follows. Catalyzes the NAD-dependent reduction of succinylglutamate semialdehyde into succinylglutamate. This chain is N-succinylglutamate 5-semialdehyde dehydrogenase, found in Burkholderia thailandensis (strain ATCC 700388 / DSM 13276 / CCUG 48851 / CIP 106301 / E264).